The chain runs to 633 residues: MAKVVGIDLGTTNSCVAVMEGGKPTVIANAEGFRTTPSVVAFAKNGDTLVGQIAKRQAVMNPENTFYSVKRFIGRRYDEVTNEATEVSYKVLSSGGNVKVDSPGAGKQFAPEEISAKVLRKLVEDASKYLGETVTQAVITVPAYFNDSQRQATKDAGKIAGIEVMRIINEPTAASLAYGFDKKSNETILVFDLGGGTFDVSVLEVGDGVFEVLATSGDTHLGGDDFDKKIVDFLAEQFRKDEGIDLRKDKQALQRLTEAAEKAKIELSSVTQAEINLPFITATQDGPKHLDMTLTRAKFEELCADLIDRCRIPVEQALRDAKLKKENIDEVVLVGGSTRIPAVQQLVKNLLGREPNQTVNPDEVVAVGAAIQAGVLGGEVTGILLLDVTPLSLGVETLGGVMTKIIPRNTTIPTKKSEVFSTAVDGQTNVEIHVLQGEREFANDNKSLGTFRLDGIPPAPRGVPQIEVVFDIDANGILNVTAKDKGTGKEQSISITGASTLDKTDIDRMVREAEQNASSDKERREKIERKNQADSLAYQAEKQLQELGDKVPEADKTKVEGLVKDLREAVAKEDDEQIKKLTPELQQALFAVGSNIYQQAGGGAAPGAAPQDGGTTSSDGGDDVIDADFTETK.

At T197 the chain carries Phosphothreonine; by autocatalysis. The span at 513 to 532 (AEQNASSDKERREKIERKNQ) shows a compositional bias: basic and acidic residues. Disordered regions lie at residues 513-534 (AEQN…NQAD) and 598-633 (QQAG…TETK). The segment covering 606–619 (PGAAPQDGGTTSSD) has biased composition (low complexity). Over residues 620-633 (GGDDVIDADFTETK) the composition is skewed to acidic residues.

The protein belongs to the heat shock protein 70 family.

Its function is as follows. Acts as a chaperone. This Nostoc sp. (strain PCC 7120 / SAG 25.82 / UTEX 2576) protein is Chaperone protein dnaK2 (dnaK2).